Consider the following 824-residue polypeptide: Protein bicaudal D homolog 2 (824 aa).

Position 2 is an N-acetylserine (Ser-2). A coiled-coil region spans residues 20 to 269 (EWLRAEVKRL…ELSHYMSIND (250 aa)). The interval 25-398 (EVKRLSHELA…RLTENLSALR (374 aa)) is interacts with DYNLL1, DYNC1H1, DYNC1I2, DCTN1 and DCTN2. Phosphoserine occurs at positions 190, 224, and 318. A disordered region spans residues 311-330 (LPLDNKTSTPKKEGLAPPSP). Thr-319 carries the post-translational modification Phosphothreonine. Positions 334–599 (SDLLSELNIS…LLAPEAGRAD (266 aa)) are interaction with KIF5A. A coiled-coil region spans residues 338–537 (SELNISEIQK…VTFSEELANL (200 aa)). 2 positions are modified to phosphoserine: Ser-343 and Ser-395. Disordered regions lie at residues 398–425 (RRLQ…GDYY), 559–622 (EGQG…DPRR), and 804–824 (EQTR…TPSL). A compositionally biased stretch (basic and acidic residues) spans 402–422 (ASKERQTALDNEKDRDSHEDG). Phosphoserine occurs at positions 568, 574, and 582. The interaction with RANBP2 stretch occupies residues 590-824 (LLAPEAGRAD…PKTKPATPSL (235 aa)). Position 602 is a phosphothreonine (Thr-602). The segment covering 604–618 (DSSPSPGSSLPSPLS) has biased composition (low complexity). Residues 666–808 (DKDKEALMEE…LELDHEQTRR (143 aa)) are a coiled coil. The interval 666 to 814 (DKDKEALMEE…QTRRGRAKAA (149 aa)) is interacts with RAB6A. Thr-821 carries the post-translational modification Phosphothreonine. Residue Ser-823 is modified to Phosphoserine.

The protein belongs to the BicD family. As to quaternary structure, part of a tripartite complex with dynein and dynactin, acts an adapter linking the dynein motor complex and dynactin. Interacts with CPNE4 (via VWFA domain). Interacts with RAB6A. Interacts with NEK9. Interacts with DNAI1. Interacts with DYNC1H1. Interacts with RANBP2. Binds preferentially to tyrosinated microtubules than to detyrosinated microtubules. Interacts with DYNLL1, DYNC1I2; DCTN1, DCTN2 and KIF5A. Interacts with KIF1C. Phosphorylated by NEK9 in vitro. In terms of tissue distribution, ubiquitous.

It localises to the golgi apparatus. Its subcellular location is the cytoplasm. The protein localises to the cytoskeleton. The protein resides in the nucleus envelope. It is found in the nucleus. It localises to the nuclear pore complex. Acts as an adapter protein linking the dynein motor complex to various cargos and converts dynein from a non-processive to a highly processive motor in the presence of dynactin. Facilitates and stabilizes the interaction between dynein and dynactin and activates dynein processivity (the ability to move along a microtubule for a long distance without falling off the track). Facilitates the binding of RAB6A to the Golgi by stabilizing its GTP-bound form. Regulates coat complex coatomer protein I (COPI)-independent Golgi-endoplasmic reticulum transport via its interaction with RAB6A and recruitment of the dynein-dynactin motor complex. Contributes to nuclear and centrosomal positioning prior to mitotic entry through regulation of both dynein and kinesin-1. During G2 phase of the cell cycle, associates with RANBP2 at the nuclear pores and recruits dynein and dynactin to the nuclear envelope to ensure proper positioning of the nucleus relative to centrosomes prior to the onset of mitosis. The sequence is that of Protein bicaudal D homolog 2 from Homo sapiens (Human).